Consider the following 509-residue polypeptide: ATP synthase subunit alpha 1 (509 aa).

172-179 contributes to the ATP binding site; sequence GDRQTGKT.

This sequence belongs to the ATPase alpha/beta chains family. As to quaternary structure, F-type ATPases have 2 components, CF(1) - the catalytic core - and CF(0) - the membrane proton channel. CF(1) has five subunits: alpha(3), beta(3), gamma(1), delta(1), epsilon(1). CF(0) has four main subunits: a(1), b(1), b'(1) and c(9-12).

Its subcellular location is the cell inner membrane. The enzyme catalyses ATP + H2O + 4 H(+)(in) = ADP + phosphate + 5 H(+)(out). In terms of biological role, produces ATP from ADP in the presence of a proton gradient across the membrane. The alpha chain is a regulatory subunit. This chain is ATP synthase subunit alpha 1, found in Dinoroseobacter shibae (strain DSM 16493 / NCIMB 14021 / DFL 12).